A 197-amino-acid chain; its full sequence is Ribosome maturation factor RimM (197 aa).

Positions 92–164 (DEGWYEHELV…YILVTPPPGL (73 aa)) constitute a PRC barrel domain. Residues 167–197 (INVEDSGETSDAGESGPGEAEPGKAEAGDNA) form a disordered region. A compositionally biased stretch (low complexity) spans 176-186 (SDAGESGPGEA). Over residues 187 to 197 (EPGKAEAGDNA) the composition is skewed to basic and acidic residues.

Belongs to the RimM family. In terms of assembly, binds ribosomal protein uS19.

The protein localises to the cytoplasm. In terms of biological role, an accessory protein needed during the final step in the assembly of 30S ribosomal subunit, possibly for assembly of the head region. Essential for efficient processing of 16S rRNA. May be needed both before and after RbfA during the maturation of 16S rRNA. It has affinity for free ribosomal 30S subunits but not for 70S ribosomes. The sequence is that of Ribosome maturation factor RimM from Arthrobacter sp. (strain FB24).